Here is a 1258-residue protein sequence, read N- to C-terminus: Trafficking protein particle complex subunit 10 (1258 aa).

The residue at position 707 (Ser707) is a Phosphoserine. 2 disordered regions span residues 888 to 913 (PASG…QRAG) and 1201 to 1222 (SSLR…GLPM). The segment covering 901–911 (ELHRKQKDSQR) has biased composition (basic and acidic residues). A compositionally biased stretch (low complexity) spans 1201-1214 (SSLRSRGSTHSTSS).

It belongs to the TRAPPC10 family. In terms of assembly, specific component of the multisubunit TRAPP II complex, which includes at least TRAPPC1, TRAPPC2, TRAPPC3, TRAPPC4, TRAPPC5, TRAPPC6A/B, TRAPPC9, TRAPPC10 and TRAPPC14. TRAPPC9, TRAPPC10 and TRAPPC14 are specific subunits of the TRAPP II complex. Interacts with TRAPPC14.

The protein resides in the golgi apparatus. The protein localises to the cis-Golgi network. In terms of biological role, specific subunit of the TRAPP (transport protein particle) II complex, a highly conserved vesicle tethering complex that functions in late Golgi trafficking as a membrane tether. The chain is Trafficking protein particle complex subunit 10 (Trappc10) from Mus musculus (Mouse).